The primary structure comprises 500 residues: Probable cytosol aminopeptidase (500 aa).

Mn(2+)-binding residues include lysine 265 and aspartate 270. Lysine 277 is a catalytic residue. Residues aspartate 288, aspartate 347, and glutamate 349 each contribute to the Mn(2+) site. The active site involves arginine 351.

It belongs to the peptidase M17 family. The cofactor is Mn(2+).

It localises to the cytoplasm. The enzyme catalyses Release of an N-terminal amino acid, Xaa-|-Yaa-, in which Xaa is preferably Leu, but may be other amino acids including Pro although not Arg or Lys, and Yaa may be Pro. Amino acid amides and methyl esters are also readily hydrolyzed, but rates on arylamides are exceedingly low.. It catalyses the reaction Release of an N-terminal amino acid, preferentially leucine, but not glutamic or aspartic acids.. In terms of biological role, presumably involved in the processing and regular turnover of intracellular proteins. Catalyzes the removal of unsubstituted N-terminal amino acids from various peptides. This is Probable cytosol aminopeptidase from Corynebacterium glutamicum (strain ATCC 13032 / DSM 20300 / JCM 1318 / BCRC 11384 / CCUG 27702 / LMG 3730 / NBRC 12168 / NCIMB 10025 / NRRL B-2784 / 534).